Consider the following 458-residue polypeptide: Elongation factor 1-alpha 1 (458 aa).

N,N,N-trimethylglycine is present on glycine 2. Position 3 is an N6,N6-dimethyllysine; alternate (lysine 3). N6-methyllysine; alternate is present on lysine 3. Residues 5–240 enclose the tr-type G domain; it reads KTHVNVVVIG…DAIEPPTRPT (236 aa). Positions 14–21 are G1; that stretch reads GHVDSGKS. 14-21 is a GTP binding site; the sequence is GHVDSGKS. The residue at position 30 (lysine 30) is an N6-methyllysine. The interval 70–74 is G2; it reads GITID. At lysine 79 the chain carries N6,N6,N6-trimethyllysine. The segment at 91-94 is G3; the sequence is DAPG. GTP-binding positions include 91–95 and 153–156; these read DAPGH and NKMD. A G4 region spans residues 153–156; the sequence is NKMD. Positions 192–194 are G5; it reads SGW. Lysine 316 carries the post-translational modification N6,N6-dimethyllysine; alternate. Lysine 316 is modified (N6-methyllysine; alternate). The residue at position 390 (lysine 390) is an N6-methyllysine.

This sequence belongs to the TRAFAC class translation factor GTPase superfamily. Classic translation factor GTPase family. EF-Tu/EF-1A subfamily.

It is found in the cytoplasm. Functionally, this protein promotes the GTP-dependent binding of aminoacyl-tRNA to the A-site of ribosomes during protein biosynthesis. This Candida albicans (strain SC5314 / ATCC MYA-2876) (Yeast) protein is Elongation factor 1-alpha 1 (TEF1).